A 203-amino-acid chain; its full sequence is Outer-membrane lipoprotein carrier protein (203 aa).

A signal peptide spans 1–21 (MKKWLAISCLIAGVTSTAVYA).

The protein belongs to the LolA family. In terms of assembly, monomer.

Its subcellular location is the periplasm. Functionally, participates in the translocation of lipoproteins from the inner membrane to the outer membrane. Only forms a complex with a lipoprotein if the residue after the N-terminal Cys is not an aspartate (The Asp acts as a targeting signal to indicate that the lipoprotein should stay in the inner membrane). In Pectobacterium atrosepticum (strain SCRI 1043 / ATCC BAA-672) (Erwinia carotovora subsp. atroseptica), this protein is Outer-membrane lipoprotein carrier protein.